Reading from the N-terminus, the 354-residue chain is Guanine nucleotide-binding protein G(o) subunit alpha (354 aa).

The N-myristoyl glycine moiety is linked to residue Gly-2. Residue Cys-3 is the site of S-palmitoyl cysteine attachment. In terms of domain architecture, G-alpha spans 32-354; the sequence is KDIKLLLLGA…ANNLRGCGLY (323 aa). The G1 motif stretch occupies residues 35 to 48; the sequence is KLLLLGAGESGKST. GTP contacts are provided by residues 40-47, 176-182, 201-205, 270-273, and Ala-326; these read GAGESGKS, LRTRVKT, DVGGQ, and NKKD. The Mg(2+) site is built by Ser-47 and Thr-182. Residues 174 to 182 form a G2 motif region; that stretch reads DILRTRVKT. Positions 197–206 are G3 motif; sequence FKLFDVGGQR. The tract at residues 266 to 273 is G4 motif; sequence ILFLNKKD. The segment at 324 to 329 is G5 motif; it reads TCATDT.

This sequence belongs to the G-alpha family. G(i/o/t/z) subfamily. As to quaternary structure, g proteins are composed of 3 units; alpha, beta and gamma. The alpha chain contains the guanine nucleotide binding site. Interacts (in GDP-bound form) with gpr-1; gpr-1 forms a complex with gpr-2 and lin-5. Interacts (in GDP-bound form) with gpb-1. Interacts (in GDP-bound form) with gbas-1 (via GBA motif); the interaction leads to activation of goa-1. Expressed in the ASER neuron and the intestine.

Functionally, guanine nucleotide-binding proteins (G proteins) are involved as modulators or transducers in various transmembrane signaling systems. In the 1-cell embryo, probably together with gpa-16, controls nuclear rotation and spindle elongation during mitosis. During the first embryonic cell divisions, plays a role in gpr-1/2 cortical localization and in the proper orientation of EMS blastomere mitotic spindle. Polarity determinants (par genes) may regulate lin-5/gpr-1/gpr-2/goa-1 locally to create the asymmetric forces that drive spindle movement. Involved in chemosensory responses to attractive and repellent odors detected by AWC and AWB sensory neurons, respectively. In ASER neurons, acts downstream of glr-3 to regulate cold avoidance behavior via calcium signaling, and it may also play a role in sensing cold in the intestine. Negatively regulates axon regeneration after injury downstream of the inhibitory compound arachidonoyl ethanolamide (AEA) by antagonizing the activation of the JNK pathway (mlk-1/mek-1/kgb-1). In neurons, may negatively regulate diacylglycerol (DAG) production mediated by egl-30 signaling cascade and thereby negatively regulates acetylcholine release. Couples to the muscarinic acetylcholine receptor gar-2 to negatively regulate cholinergic receptor activity in the presence of high levels of acetylcholine in ventral cord motor neurons. Plays a role in the navigational capacity of sperm and the targeting of sperm derived from males to the fertilization site in the uterus of hermaphrodites. Involved in egg-laying and in regulating dopamine-mediated locomotion. Most likely couples to the dopamine receptors dop-2 and dop-3 to positively regulate the dopamine-mediated suppression of crh-1/CREB1 transcription factor activation in cholinergic SIA neurons in the presence of food. The sequence is that of Guanine nucleotide-binding protein G(o) subunit alpha from Caenorhabditis elegans.